Here is a 342-residue protein sequence, read N- to C-terminus: Phosphate acyltransferase (342 aa).

This sequence belongs to the PlsX family. In terms of assembly, homodimer. Probably interacts with PlsY.

The protein localises to the cytoplasm. It catalyses the reaction a fatty acyl-[ACP] + phosphate = an acyl phosphate + holo-[ACP]. Its pathway is lipid metabolism; phospholipid metabolism. Its function is as follows. Catalyzes the reversible formation of acyl-phosphate (acyl-PO(4)) from acyl-[acyl-carrier-protein] (acyl-ACP). This enzyme utilizes acyl-ACP as fatty acyl donor, but not acyl-CoA. This Legionella pneumophila (strain Corby) protein is Phosphate acyltransferase.